The following is a 338-amino-acid chain: MAGSHPYFNLPDSTHPSPPSAPPSLRWCQRCQPSDATNGLLVALLGGGLPAGFVGPLSRMAYQASNLPSLELLICRCLFHLPIALPLKLHGDPLLGPPDIRGRACFCALLNVLSIGCAYSAVQVVPAGNAATVRKGSSTVCSAILTLCLESQGLSGYDWCGLLGSILGLIIIVGPGLWTLQEGTMGVYTALGYVQAFLGGLALSLGLLVYRSLHFPSCLPTVAFLSGLVGLLGSVPGLFVLQTPVLPSDLLSWSCVGAVGILALVSFTCVGYAVTKAHPALVCAVLHSEVVVALILQYYVLHETVAPSDIMGAGIVLGSIAIITARNLSCERTGKVEE.

The tract at residues 1 to 21 (MAGSHPYFNLPDSTHPSPPSA) is disordered. The next 9 membrane-spanning stretches (helical) occupy residues 37-57 (TNGL…VGPL), 67-87 (LPSL…ALPL), 105-125 (CFCA…VQVV), 160-180 (CGLL…LWTL), 190-210 (ALGY…LLVY), 221-241 (TVAF…LFVL), 250-270 (LLSW…FTCV), 281-301 (LVCA…YYVL), and 305-325 (VAPS…IITA). Residues 49 to 174 (LPAGFVGPLS…SILGLIIIVG (126 aa)) enclose the EamA 1 domain. An EamA 2 domain is found at 272–325 (YAVTKAHPALVCAVLHSEVVVALILQYYVLHETVAPSDIMGAGIVLGSIAIITA).

This sequence belongs to the SLC35G solute transporter family.

It localises to the membrane. The chain is Solute carrier family 35 member G5 (SLC35G5) from Pan troglodytes (Chimpanzee).